The primary structure comprises 242 residues: UDP-2,3-diacylglucosamine hydrolase (242 aa).

Positions 8, 10, 41, 79, and 114 each coordinate Mn(2+). A substrate-binding site is contributed by 79 to 80; the sequence is NR. Residues aspartate 122, lysine 164, lysine 167, and histidine 195 each contribute to the substrate site. Mn(2+)-binding residues include histidine 195 and histidine 197.

It belongs to the LpxH family. Mn(2+) serves as cofactor.

It localises to the cell inner membrane. It catalyses the reaction UDP-2-N,3-O-bis[(3R)-3-hydroxytetradecanoyl]-alpha-D-glucosamine + H2O = 2-N,3-O-bis[(3R)-3-hydroxytetradecanoyl]-alpha-D-glucosaminyl 1-phosphate + UMP + 2 H(+). It participates in glycolipid biosynthesis; lipid IV(A) biosynthesis; lipid IV(A) from (3R)-3-hydroxytetradecanoyl-[acyl-carrier-protein] and UDP-N-acetyl-alpha-D-glucosamine: step 4/6. Its function is as follows. Hydrolyzes the pyrophosphate bond of UDP-2,3-diacylglucosamine to yield 2,3-diacylglucosamine 1-phosphate (lipid X) and UMP by catalyzing the attack of water at the alpha-P atom. Involved in the biosynthesis of lipid A, a phosphorylated glycolipid that anchors the lipopolysaccharide to the outer membrane of the cell. The sequence is that of UDP-2,3-diacylglucosamine hydrolase from Vibrio cholerae serotype O1 (strain ATCC 39315 / El Tor Inaba N16961).